The sequence spans 223 residues: Ribonuclease HII (223 aa).

Positions 32–223 (LYIAGVDEVG…LKKRYRDYMS (192 aa)) constitute an RNase H type-2 domain. Residues Asp-38, Glu-39, and Asp-130 each contribute to the a divalent metal cation site.

This sequence belongs to the RNase HII family. Mn(2+) is required as a cofactor. The cofactor is Mg(2+).

It localises to the cytoplasm. The catalysed reaction is Endonucleolytic cleavage to 5'-phosphomonoester.. Endonuclease that specifically degrades the RNA of RNA-DNA hybrids. The chain is Ribonuclease HII from Bartonella henselae (strain ATCC 49882 / DSM 28221 / CCUG 30454 / Houston 1) (Rochalimaea henselae).